The chain runs to 72 residues: Large ribosomal subunit protein uL29 (72 aa).

It belongs to the universal ribosomal protein uL29 family.

This Caldicellulosiruptor saccharolyticus (strain ATCC 43494 / DSM 8903 / Tp8T 6331) protein is Large ribosomal subunit protein uL29.